Consider the following 291-residue polypeptide: MRDYVLRATSGNGQVRAFVATTRNTVEEARRLHETTKVATAALGRTLTATSIMGLMMKNDSDKLTVIIKGGGPIGTIIATSDSKGMVKGYVGNPQVEVEDYPNGKLNVAAAVGTEGVVKVIKDLGLREPYNGTYPLVSGEIAEDFTYYFAVSEQTPSVVALGVLTKEDEVEFAGGFIVQLMPDAEEETIAKLEENVAKLPSITNMLKEGKSPEDILNIVLDGLEPKILDTCEVGFMCECSKERVKTALVAIGKKSLAQIIEEDKKAEVGCQFCNKKYMYSEEELLEILKEM.

2 disulfides stabilise this stretch: cysteine 237/cysteine 239 and cysteine 270/cysteine 273.

Belongs to the HSP33 family. Under oxidizing conditions two disulfide bonds are formed involving the reactive cysteines. Under reducing conditions zinc is bound to the reactive cysteines and the protein is inactive.

The protein localises to the cytoplasm. Redox regulated molecular chaperone. Protects both thermally unfolding and oxidatively damaged proteins from irreversible aggregation. Plays an important role in the bacterial defense system toward oxidative stress. In Clostridioides difficile (strain 630) (Peptoclostridium difficile), this protein is 33 kDa chaperonin.